The following is a 102-amino-acid chain: MNGQNIRIRLKAFDHRVLDASTKEIVSTAKRTGANVRGPIPLPTRIEKFTVNRSPHVDKKSREQFEMRTHKRLLDIVDPTPQTVDALMKLDLAAGVDVEIKL.

This sequence belongs to the universal ribosomal protein uS10 family. Part of the 30S ribosomal subunit.

Its function is as follows. Involved in the binding of tRNA to the ribosomes. The polypeptide is Small ribosomal subunit protein uS10 (Mesorhizobium japonicum (strain LMG 29417 / CECT 9101 / MAFF 303099) (Mesorhizobium loti (strain MAFF 303099))).